We begin with the raw amino-acid sequence, 190 residues long: Large ribosomal subunit protein bL9 (190 aa).

Belongs to the bacterial ribosomal protein bL9 family.

In terms of biological role, binds to the 23S rRNA. The sequence is that of Large ribosomal subunit protein bL9 from Rhodobacter capsulatus (strain ATCC BAA-309 / NBRC 16581 / SB1003).